Here is a 435-residue protein sequence, read N- to C-terminus: Serine--tRNA ligase (435 aa).

Thr242–Glu244 contributes to the L-serine binding site. Arg273–Glu275 contacts ATP. Residue Glu296 participates in L-serine binding. Glu360–Ser363 is a binding site for ATP. Ser396 serves as a coordination point for L-serine.

Belongs to the class-II aminoacyl-tRNA synthetase family. Type-1 seryl-tRNA synthetase subfamily. As to quaternary structure, homodimer. The tRNA molecule binds across the dimer.

The protein localises to the cytoplasm. The catalysed reaction is tRNA(Ser) + L-serine + ATP = L-seryl-tRNA(Ser) + AMP + diphosphate + H(+). The enzyme catalyses tRNA(Sec) + L-serine + ATP = L-seryl-tRNA(Sec) + AMP + diphosphate + H(+). The protein operates within aminoacyl-tRNA biosynthesis; selenocysteinyl-tRNA(Sec) biosynthesis; L-seryl-tRNA(Sec) from L-serine and tRNA(Sec): step 1/1. In terms of biological role, catalyzes the attachment of serine to tRNA(Ser). Is also able to aminoacylate tRNA(Sec) with serine, to form the misacylated tRNA L-seryl-tRNA(Sec), which will be further converted into selenocysteinyl-tRNA(Sec). This is Serine--tRNA ligase from Vibrio vulnificus (strain CMCP6).